The following is a 320-amino-acid chain: Phosphate acetyltransferase (320 aa).

Belongs to the phosphate acetyltransferase and butyryltransferase family.

Its subcellular location is the cytoplasm. It carries out the reaction acetyl-CoA + phosphate = acetyl phosphate + CoA. Its pathway is metabolic intermediate biosynthesis; acetyl-CoA biosynthesis; acetyl-CoA from acetate: step 2/2. This is Phosphate acetyltransferase (pta) from Mycoplasma pneumoniae (strain ATCC 29342 / M129 / Subtype 1) (Mycoplasmoides pneumoniae).